The primary structure comprises 362 residues: Carbamoyl phosphate synthase pyrimidine-specific small chain (362 aa).

The segment at 1 to 168 (MKRQLILEDG…TRDPYHVPGP (168 aa)) is CPSase. Serine 45, glycine 219, and glycine 221 together coordinate L-glutamine. Residues 171 to 358 (RVVLVDYGMK…IKLMESNKHR (188 aa)) form the Glutamine amidotransferase type-1 domain. The active-site Nucleophile is cysteine 246. L-glutamine is bound by residues leucine 247, glutamine 250, asparagine 288, glycine 290, and tyrosine 291. Catalysis depends on residues histidine 331 and glutamate 333.

Belongs to the CarA family. As to quaternary structure, composed of two chains; the small (or glutamine) chain promotes the hydrolysis of glutamine to ammonia, which is used by the large (or ammonia) chain to synthesize carbamoyl phosphate. Tetramer of heterodimers (alpha,beta)4.

The enzyme catalyses hydrogencarbonate + L-glutamine + 2 ATP + H2O = carbamoyl phosphate + L-glutamate + 2 ADP + phosphate + 2 H(+). It carries out the reaction L-glutamine + H2O = L-glutamate + NH4(+). It functions in the pathway pyrimidine metabolism; UMP biosynthesis via de novo pathway; (S)-dihydroorotate from bicarbonate: step 1/3. Functionally, small subunit of the glutamine-dependent carbamoyl phosphate synthetase (CPSase). CPSase catalyzes the formation of carbamoyl phosphate from the ammonia moiety of glutamine, carbonate, and phosphate donated by ATP, constituting the first step of the biosynthetic pathway leading to pyrimidine nucleotides. The small subunit (glutamine amidotransferase) binds and cleaves glutamine to supply the large subunit with the substrate ammonia. The protein is Carbamoyl phosphate synthase pyrimidine-specific small chain of Halalkalibacterium halodurans (strain ATCC BAA-125 / DSM 18197 / FERM 7344 / JCM 9153 / C-125) (Bacillus halodurans).